The following is a 973-amino-acid chain: MVKKRVHELAKELKIESKEIINRLNQMGINVKSHMSTLEDGVVERLHQLYRPDQEEVKPAAAKPPAAGQTIKPEEVAPQAQPESRKKDAAMLDSQKPDRDRVQKNGRERAGKATRADHYKGAGLVERVPSRPPDRRFQERPKQSDKARPWGQPRADQGARLKTADFVQERTRSARAGQDYSQPEKVQQERVQDRQQKERPPFEKAQQPRPQHEHKPQDSVKERPHPERASREADNAKRAERLDKGAGKTAEIAYKSGLKALEKAQVGTKPQRAGERGARPGGLHETKPKKNLAPGDAGYAKLWQEQTPVIPQKLLDDRRRQTEEKVKVTEKQKQQAKSQKLVKSREKRNAMAELAEERLRPRPAVAGSRKKGAAKPQEQAQKPAQPLEKKPIVLGESTTVQELALKMHKSPAELIKKLMQLGVMATINQEIDTDTATILAGEFGYEVEVKLPVDIEAMLMQEPEDDPVSLQDRPCVVTVMGHVDHGKTSLLDAIRETNVTATEAGGITQHIGAYQVEHNGKKITFLDTPGHEAFTAMRARGARVTDIAILVVAADDGVMPQTVEAINHAKEAKVPIIVAINKIDKPGANPDRVKQQLTEHGLVAEEWGGDTICVNVSALKKEGLKDLLEMILLVAEMSELKANPNRPARGTVIEAELDKGRGPVANVLVQNGTLNVGDTLIAGAAFGRVRAMMDDKGRRIKKAGPSTPVEVLGFSEVPQAGDIFVVVEDEKLARTIVARRQARKREEELKSTARVSLADLFKHIQEGQIKELGIIIKADVQGSVEALRQALERLSTDEVRVNIIHGGVGAITETDVMLASASNAIIIGFNVRPDVNARKAAENEKVDVRLYRVIYDAIEDVKAAMSGLLEPEYREVTLGRAEIRKIFRSSKIGNIAGCYVLEGKIERDASVRVIRDGIVVHEGKLESLKRFKDDVREVVQGYECGIALEKFNEIQEGDIIEAFTVEAIKRQLT.

The disordered stretch occupies residues 52 to 388 (PDQEEVKPAA…QAQKPAQPLE (337 aa)). 8 stretches are compositionally biased toward basic and acidic residues: residues 83-120 (ESRK…DHYK), 128-148 (VPSR…DKAR), 157-172 (QGAR…ERTR), 186-202 (VQQE…RPPF), 210-246 (PQHE…DKGA), 272-288 (RAGE…ETKP), 314-333 (LLDD…EKQK), and 343-360 (KSRE…ERLR). Positions 374-386 (AKPQEQAQKPAQP) are enriched in low complexity. The tr-type G domain occupies 472-641 (DRPCVVTVMG…LLVAEMSELK (170 aa)). Residues 481–488 (GHVDHGKT) form a G1 region. 481–488 (GHVDHGKT) is a GTP binding site. The G2 stretch occupies residues 506–510 (GITQH). The tract at residues 527 to 530 (DTPG) is G3. Residues 527 to 531 (DTPGH) and 581 to 584 (NKID) each bind GTP. Positions 581-584 (NKID) are G4. The interval 617–619 (SAL) is G5.

It belongs to the TRAFAC class translation factor GTPase superfamily. Classic translation factor GTPase family. IF-2 subfamily.

The protein localises to the cytoplasm. Its function is as follows. One of the essential components for the initiation of protein synthesis. Protects formylmethionyl-tRNA from spontaneous hydrolysis and promotes its binding to the 30S ribosomal subunits. Also involved in the hydrolysis of GTP during the formation of the 70S ribosomal complex. The chain is Translation initiation factor IF-2 from Pelotomaculum thermopropionicum (strain DSM 13744 / JCM 10971 / SI).